Reading from the N-terminus, the 201-residue chain is Small ribosomal subunit protein uS4c (201 aa).

In terms of domain architecture, S4 RNA-binding spans 89-152 (MRLDNILFRL…NSRTLVQNLL (64 aa)).

This sequence belongs to the universal ribosomal protein uS4 family. In terms of assembly, part of the 30S ribosomal subunit. Contacts protein S5. The interaction surface between S4 and S5 is involved in control of translational fidelity.

It localises to the plastid. Its subcellular location is the chloroplast. Its function is as follows. One of the primary rRNA binding proteins, it binds directly to 16S rRNA where it nucleates assembly of the body of the 30S subunit. With S5 and S12 plays an important role in translational accuracy. The chain is Small ribosomal subunit protein uS4c (rps4) from Capsella bursa-pastoris (Shepherd's purse).